Reading from the N-terminus, the 205-residue chain is Glycerol-3-phosphate acyltransferase (205 aa).

6 consecutive transmembrane segments (helical) span residues 5 to 25, 54 to 74, 87 to 107, 117 to 137, 138 to 158, and 162 to 182; these read LALG…GYLA, GPAA…VWLA, IVLG…WLAF, VGLL…VWGV, CFAV…ATPL, and LWRA…YIVW.

It belongs to the PlsY family. Probably interacts with PlsX.

It is found in the cell inner membrane. The catalysed reaction is an acyl phosphate + sn-glycerol 3-phosphate = a 1-acyl-sn-glycero-3-phosphate + phosphate. It functions in the pathway lipid metabolism; phospholipid metabolism. Catalyzes the transfer of an acyl group from acyl-phosphate (acyl-PO(4)) to glycerol-3-phosphate (G3P) to form lysophosphatidic acid (LPA). This enzyme utilizes acyl-phosphate as fatty acyl donor, but not acyl-CoA or acyl-ACP. This Gloeobacter violaceus (strain ATCC 29082 / PCC 7421) protein is Glycerol-3-phosphate acyltransferase.